We begin with the raw amino-acid sequence, 413 residues long: Phosphoglycerate kinase (413 aa).

Residues Asp-19–Asn-21, Arg-34, His-57–Lys-60, Arg-114, and Arg-154 contribute to the substrate site. Residues Glu-332 and Gly-358 to Ser-361 each bind ATP.

The protein belongs to the phosphoglycerate kinase family. As to quaternary structure, monomer.

It localises to the cytoplasm. The catalysed reaction is (2R)-3-phosphoglycerate + ATP = (2R)-3-phospho-glyceroyl phosphate + ADP. It participates in carbohydrate degradation; glycolysis; pyruvate from D-glyceraldehyde 3-phosphate: step 2/5. This is Phosphoglycerate kinase from Thermococcus sibiricus (strain DSM 12597 / MM 739).